Consider the following 115-residue polypeptide: Large ribosomal subunit protein bL20 (115 aa).

It belongs to the bacterial ribosomal protein bL20 family.

Binds directly to 23S ribosomal RNA and is necessary for the in vitro assembly process of the 50S ribosomal subunit. It is not involved in the protein synthesizing functions of that subunit. The chain is Large ribosomal subunit protein bL20 from Borrelia turicatae (strain 91E135).